Consider the following 308-residue polypeptide: Olfactory receptor OR9H1 (308 aa).

The Extracellular portion of the chain corresponds to 1–26 (MVNFTHVSEFVLLGFQGGPGMQAMLF). The chain crosses the membrane as a helical span at residues 27–47 (LIFLILYGIAVVGNLGMIVII). At 48 to 58 (WVDAHLHTPMY) the chain is on the cytoplasmic side. A helical membrane pass occupies residues 59–81 (AFLQSLSLLDICYSSTIAPRALA). Topologically, residues 82–95 (NSMQEDHTISFGGC) are extracellular. Cysteines 95 and 177 form a disulfide. A helical membrane pass occupies residues 96 to 116 (AAQFFFLSLFGITEAFLLAAM). The Cytoplasmic portion of the chain corresponds to 117–137 (AYDRFIAICNPLLYSVSMSHQ). A helical membrane pass occupies residues 138 to 158 (VCVLLISGSYLWGVVNAIAQT). Residues 159-203 (TMTFRLPFCGSNEINDFFCDVPPLLSLSCSDTFINQLVLLGLCGS) are Extracellular-facing. Residues 204–224 (IIVSTFLIVLVSYIYIISTIL) form a helical membrane-spanning segment. Topologically, residues 225–245 (RIPTMQGCQKAFSTCASHLTG) are cytoplasmic. Residues 246–266 (VCLFFGTVFFMYAQPSAIFFM) form a helical membrane-spanning segment. The Extracellular segment spans residues 267–269 (EQS). A helical transmembrane segment spans residues 270–290 (KIVSIFYTMVIPMLNPLIYSL). The Cytoplasmic segment spans residues 291-308 (RNKEVKQALRRSMQKLSL).

Belongs to the G-protein coupled receptor 1 family.

Its subcellular location is the cell membrane. Functionally, odorant receptor. This Homo sapiens (Human) protein is Olfactory receptor OR9H1.